The following is a 289-amino-acid chain: Probable branched-chain-amino-acid aminotransferase (289 aa).

Lysine 154 is subject to N6-(pyridoxal phosphate)lysine.

Belongs to the class-IV pyridoxal-phosphate-dependent aminotransferase family. The cofactor is pyridoxal 5'-phosphate.

The enzyme catalyses L-leucine + 2-oxoglutarate = 4-methyl-2-oxopentanoate + L-glutamate. It carries out the reaction L-isoleucine + 2-oxoglutarate = (S)-3-methyl-2-oxopentanoate + L-glutamate. It catalyses the reaction L-valine + 2-oxoglutarate = 3-methyl-2-oxobutanoate + L-glutamate. Its pathway is amino-acid biosynthesis; L-isoleucine biosynthesis; L-isoleucine from 2-oxobutanoate: step 4/4. The protein operates within amino-acid biosynthesis; L-leucine biosynthesis; L-leucine from 3-methyl-2-oxobutanoate: step 4/4. It functions in the pathway amino-acid biosynthesis; L-valine biosynthesis; L-valine from pyruvate: step 4/4. Acts on leucine, isoleucine and valine. This Rickettsia bellii (strain RML369-C) protein is Probable branched-chain-amino-acid aminotransferase (ilvE).